The following is a 100-amino-acid chain: Integration host factor subunit alpha (100 aa).

Belongs to the bacterial histone-like protein family. Heterodimer of an alpha and a beta chain.

Its function is as follows. This protein is one of the two subunits of integration host factor, a specific DNA-binding protein that functions in genetic recombination as well as in transcriptional and translational control. This is Integration host factor subunit alpha from Ruegeria pomeroyi (strain ATCC 700808 / DSM 15171 / DSS-3) (Silicibacter pomeroyi).